The chain runs to 415 residues: WD-40 repeat-containing protein MSI2 (415 aa).

WD repeat units follow at residues 166 to 206 (GHDK…QDKV), 215 to 255 (GHES…MQHQ), 258 to 298 (VHER…APLH), 302 to 342 (SHEG…EEQL), and 361 to 401 (GHKA…YRDE). The DWD box signature appears at 232 to 248 (LFGSAGEDGRLVIWDTR).

This sequence belongs to the WD repeat RBAP46/RBAP48/MSI1 family.

Its subcellular location is the nucleus. Core histone-binding subunit that may target chromatin assembly factors, chromatin remodeling factors and histone deacetylases to their histone substrates in a manner that is regulated by nucleosomal DNA. In Arabidopsis thaliana (Mouse-ear cress), this protein is WD-40 repeat-containing protein MSI2 (MSI2).